The primary structure comprises 519 residues: Light-independent protochlorophyllide reductase subunit B (519 aa).

Asp36 contributes to the [4Fe-4S] cluster binding site. The Proton donor role is filled by Asp274. Substrate is bound at residue 409–410 (GL). The tract at residues 426–465 (DEAGPSHHGGHSPKPSEAARTPDKVEERADPAPEAPQTGS) is disordered. The segment covering 445–456 (RTPDKVEERADP) has biased composition (basic and acidic residues).

Belongs to the ChlB/BchB/BchZ family. In terms of assembly, protochlorophyllide reductase is composed of three subunits; BchL, BchN and BchB. Forms a heterotetramer of two BchB and two BchN subunits. [4Fe-4S] cluster serves as cofactor.

It catalyses the reaction chlorophyllide a + oxidized 2[4Fe-4S]-[ferredoxin] + 2 ADP + 2 phosphate = protochlorophyllide a + reduced 2[4Fe-4S]-[ferredoxin] + 2 ATP + 2 H2O. Its pathway is porphyrin-containing compound metabolism; bacteriochlorophyll biosynthesis (light-independent). Its function is as follows. Component of the dark-operative protochlorophyllide reductase (DPOR) that uses Mg-ATP and reduced ferredoxin to reduce ring D of protochlorophyllide (Pchlide) to form chlorophyllide a (Chlide). This reaction is light-independent. The NB-protein (BchN-BchB) is the catalytic component of the complex. In Jannaschia sp. (strain CCS1), this protein is Light-independent protochlorophyllide reductase subunit B.